The primary structure comprises 64 residues: Large ribosomal subunit protein bL35 (64 aa).

The interval 1-23 is disordered; sequence MPKMKTHRGAAKRFKKTKNKIKR.

It belongs to the bacterial ribosomal protein bL35 family.

This Nitratiruptor sp. (strain SB155-2) protein is Large ribosomal subunit protein bL35.